We begin with the raw amino-acid sequence, 71 residues long: Large ribosomal subunit protein bL31 (71 aa).

Zn(2+)-binding residues include Cys-16, Cys-18, Cys-38, and Cys-41.

Belongs to the bacterial ribosomal protein bL31 family. Type A subfamily. Part of the 50S ribosomal subunit. The cofactor is Zn(2+).

Functionally, binds the 23S rRNA. The sequence is that of Large ribosomal subunit protein bL31 from Laribacter hongkongensis (strain HLHK9).